A 409-amino-acid polypeptide reads, in one-letter code: Glutamate--tRNA ligase 2 (409 aa).

Residues 9–19 (PSPTGNLHIGG) carry the 'HIGH' region motif. Residues 198–202 (KLSKR) carry the 'KMSKS' region motif. Lys201 lines the ATP pocket.

This sequence belongs to the class-I aminoacyl-tRNA synthetase family. Glutamate--tRNA ligase type 1 subfamily. Monomer.

The protein localises to the cytoplasm. The enzyme catalyses tRNA(Glu) + L-glutamate + ATP = L-glutamyl-tRNA(Glu) + AMP + diphosphate. In terms of biological role, catalyzes the attachment of glutamate to tRNA(Glu) in a two-step reaction: glutamate is first activated by ATP to form Glu-AMP and then transferred to the acceptor end of tRNA(Glu). In Neorickettsia sennetsu (strain ATCC VR-367 / Miyayama) (Ehrlichia sennetsu), this protein is Glutamate--tRNA ligase 2.